Reading from the N-terminus, the 206-residue chain is Ribosomal RNA small subunit methyltransferase G (206 aa).

S-adenosyl-L-methionine-binding positions include Gly-74, Leu-79, 125 to 126, and Arg-140; that span reads VE.

Belongs to the methyltransferase superfamily. RNA methyltransferase RsmG family.

It is found in the cytoplasm. It carries out the reaction guanosine(527) in 16S rRNA + S-adenosyl-L-methionine = N(7)-methylguanosine(527) in 16S rRNA + S-adenosyl-L-homocysteine. Specifically methylates the N7 position of guanine in position 527 of 16S rRNA. This chain is Ribosomal RNA small subunit methyltransferase G, found in Shewanella baltica (strain OS223).